A 764-amino-acid chain; its full sequence is MVNELENVPRASTLTNEEQTVDPSNNDSQEDISLGDSNEITSLASLKAIRSGNEEESGNEQVNHNDEAEEDPLLTRYHTACQRGDLATVKEMIHGKLLEVNNDGDSTEHITGLHWASINNRLSVVDFLVSQGADVNARAGALHATPLHWAARYGYVYIVDFLLKHGADPTMTDDQGFNLLHLSVNSSNIMLVLYVLFNVVSKGLLDIDCRDPKGRTSLLWAAYQGDSLTVAELLKFGASIKIADTEGFTPLHWGTVKGQPHVLKYLIQDGADFFQKTDTGKDCFAIAQEMNTVYSLREALTHSGFDYHGYPIKKWFKKSQHAKLVTFITPFLFLGIAFALFSHINPLFVIIVLFLLAIATNKGLNKFVLPSYGRMGVHNVTLLRSPLLSGVFFGTLLWVTIVWFFKVMPRTFSDEQYTNILMLVILVSVFYLFGQLVIMDPGCLPEETDHENVRQTISNLLEIGKFDTKNFCIETWIRKPLRSKFSPLNNAVVARFDHYCPWIFNDVGLKNHKAFIFFITLMESGIFTFLALCLEYFDELEDAHEDTSQKNGKCFILGASDLCSGLIYDRFVFLILLWALLQSIWVASLIFVQAFQICKGMTNTEFNVLMKESKSIGPDGLSFNENFNTTPEGFAPSIDPGEESNDTVLAPVPGSTIRKPRTCFGVCYAVTGMDQWLAVIKETIGIKDSTGHNVYSITSRIPTNYGWKRNVKDFWLTSDINAPLWRRILYPPSGSKALLNGIEVDYFKLYKLPNKDVEQGNDMV.

Disordered stretches follow at residues Met-1–Asn-38 and Ser-51–Asp-71. Residues Met-1–His-321 lie on the Cytoplasmic side of the membrane. Positions Arg-10–Asp-27 are enriched in polar residues. Residues Ser-51 and Ser-57 each carry the phosphoserine modification. 6 ANK repeats span residues Pro-72 to Asn-102, Glu-108 to Ala-137, Leu-142 to Met-171, Gln-175 to Leu-204, Lys-213 to Ile-242, and Glu-246 to Gln-275. Residues Ala-322–Phe-341 form a helical membrane-spanning segment. Residues Ser-342–Pro-346 lie on the Lumenal side of the membrane. Residues Leu-347–Leu-364 form a helical membrane-spanning segment. At Asn-365–Arg-384 the chain is on the cytoplasmic side. Residues Ser-385–Phe-405 form a helical membrane-spanning segment. Over Lys-406–Thr-418 the chain is Lumenal. A helical transmembrane segment spans residues Asn-419–Met-439. Topologically, residues Asp-440–Lys-513 are cytoplasmic. Positions Asn-470 to Thr-520 constitute a DHHC domain. Cys-500 serves as the catalytic S-palmitoyl cysteine intermediate. Residues Ala-514 to Leu-534 form a helical membrane-spanning segment. Topologically, residues Glu-535 to Arg-570 are lumenal. The chain crosses the membrane as a helical span at residues Phe-571–Phe-591. The Cytoplasmic segment spans residues Val-592–Val-764.

This sequence belongs to the DHHC palmitoyltransferase family. AKR/ZDHHC17 subfamily.

The protein resides in the early endosome membrane. It is found in the golgi apparatus membrane. The enzyme catalyses L-cysteinyl-[protein] + hexadecanoyl-CoA = S-hexadecanoyl-L-cysteinyl-[protein] + CoA. Its function is as follows. Palmitoyltransferase specific for casein kinase 1. Palmitoylates isoforms YCK1 and YCK2 at both C-terminal cysteine residues, which is required for their proper plasma membrane localization. Required for constitutive endocytosis of a-factor receptor STE3 and both constitutive and pheromone-induced endocytosis of alpha-factor receptor STE2. This Saccharomyces cerevisiae (strain ATCC 204508 / S288c) (Baker's yeast) protein is Palmitoyltransferase AKR1 (AKR1).